A 199-amino-acid chain; its full sequence is Imidazoleglycerol-phosphate dehydratase (199 aa).

This sequence belongs to the imidazoleglycerol-phosphate dehydratase family.

The protein resides in the cytoplasm. It carries out the reaction D-erythro-1-(imidazol-4-yl)glycerol 3-phosphate = 3-(imidazol-4-yl)-2-oxopropyl phosphate + H2O. It functions in the pathway amino-acid biosynthesis; L-histidine biosynthesis; L-histidine from 5-phospho-alpha-D-ribose 1-diphosphate: step 6/9. The protein is Imidazoleglycerol-phosphate dehydratase of Lactococcus lactis subsp. cremoris (strain MG1363).